We begin with the raw amino-acid sequence, 180 residues long: Adenine phosphoribosyltransferase (180 aa).

The protein belongs to the purine/pyrimidine phosphoribosyltransferase family. In terms of assembly, homodimer.

Its subcellular location is the cytoplasm. It catalyses the reaction AMP + diphosphate = 5-phospho-alpha-D-ribose 1-diphosphate + adenine. Its pathway is purine metabolism; AMP biosynthesis via salvage pathway; AMP from adenine: step 1/1. In terms of biological role, catalyzes a salvage reaction resulting in the formation of AMP, that is energically less costly than de novo synthesis. This chain is Adenine phosphoribosyltransferase, found in Marinomonas sp. (strain MWYL1).